A 1796-amino-acid chain; its full sequence is Non-reducing polyketide synthase nscA (1796 aa).

The interval 18 to 256 (DDLKDLFRRL…PLPVYDGLCH (239 aa)) is N-terminal acylcarrier protein transacylase domain (SAT). Positions 392-825 (SSKLAIVGMA…GGNTTLLLED (434 aa)) constitute a Ketosynthase family 3 (KS3) domain. Active-site for beta-ketoacyl synthase activity residues include C565, H700, and H743. The tract at residues 931–1251 (FTGQGAYYSG…SLVTLHLAGL (321 aa)) is malonyl-CoA:ACP transacylase (MAT) domain. The tract at residues 1317-1636 (TSLVHQITAE…RLLMDRFFSP (320 aa)) is product template (PT) domain. The segment at 1321–1457 (HQITAETVEA…ATVRFEDPVA (137 aa)) is N-terminal hotdog fold. In terms of domain architecture, PKS/mFAS DH spans 1321-1631 (HQITAETVEA…FRRVPRLLMD (311 aa)). H1353 serves as the catalytic Proton acceptor; for dehydratase activity. The segment at 1485-1631 (ASRLSKPLAY…FRRVPRLLMD (147 aa)) is C-terminal hotdog fold. D1542 serves as the catalytic Proton donor; for dehydratase activity. Positions 1688–1720 (TPESTPPLAPSSESSTPKESPIATPPESERADP) are disordered. The segment covering 1697-1708 (PSSESSTPKESP) has biased composition (low complexity). Residues 1719–1796 (DPMDNMVSQC…EMTAWIEEYC (78 aa)) enclose the Carrier domain. At S1756 the chain carries O-(pantetheine 4'-phosphoryl)serine.

The cofactor is pantetheine 4'-phosphate.

It functions in the pathway secondary metabolite biosynthesis. In terms of biological role, non-reducing polyketide synthase; part of the gene cluster that mediates the biosynthesis of neosartoricin B, a prenylated anthracenone that probably exhibits T-cell antiproliferative activity, suggestive of a physiological role as an immunosuppressive agent. The non-reducing polyketide synthase nscA probably synthesizes and cyclizes the decaketide backbone. The hydrolase nscB then mediates the product release through hydrolysis followed by spontaneous decarboxylation. The prenyltransferase nscD catalyzes the addition of the dimethylallyl group to the aromatic C5. The FAD-dependent monooxygenase nscC is then responsible for the stereospecific hydroxylation at C2. Neosartoricin B can be converted into two additional compounds neosartoricins C and D. Neosartoricin C is a spirocyclic compound that is cyclized through the attack of C3 hydroxyl on C14, followed by dehydration. On the other hand, neosartoricin D is a further cyclized compound in which attack of C2 on C14 in neosartoricin C results in the formation of the acetal-containing dioxabicyclo-octanone ring. Both of these compounds are novel and possibly represent related metabolites of the gene cluster. This chain is Non-reducing polyketide synthase nscA, found in Arthroderma otae (strain ATCC MYA-4605 / CBS 113480) (Microsporum canis).